The chain runs to 411 residues: ATP-dependent Clp protease ATP-binding subunit ClpX (411 aa).

In terms of domain architecture, ClpX-type ZB spans 1 to 51; sequence MAKKKDEEYCSFCGMPRTQVNLMLEGVHAHICDECALRAGEVVREALQKFK. Positions 10, 13, 32, and 35 each coordinate Zn(2+). 119 to 126 is an ATP binding site; sequence PTGTGKTL.

Belongs to the ClpX chaperone family. In terms of assembly, component of the ClpX-ClpP complex. Forms a hexameric ring that, in the presence of ATP, binds to fourteen ClpP subunits assembled into a disk-like structure with a central cavity, resembling the structure of eukaryotic proteasomes.

Its function is as follows. ATP-dependent specificity component of the Clp protease. It directs the protease to specific substrates. Can perform chaperone functions in the absence of ClpP. This is ATP-dependent Clp protease ATP-binding subunit ClpX from Porphyromonas gingivalis (strain ATCC 33277 / DSM 20709 / CIP 103683 / JCM 12257 / NCTC 11834 / 2561).